We begin with the raw amino-acid sequence, 1203 residues long: Regulator of telomere elongation helicase 1 (1203 aa).

The 290-residue stretch at asparagine 7–glutamine 296 folds into the Helicase ATP-binding domain. ATP is bound at residue serine 42 to threonine 49. 4 residues coordinate [4Fe-4S] cluster: cysteine 145, cysteine 163, cysteine 172, and cysteine 207. The Nuclear localization signal motif lies at lysine 151 to valine 167. A DEAH box motif is present at residues aspartate 250–histidine 253. The Nuclear localization signal signature appears at glutamine 871–lysine 877. 2 disordered regions span residues glutamine 998–glycine 1020 and threonine 1120–glutamine 1203. Positions histidine 1004 to glycine 1020 are enriched in polar residues. Residues lysine 1123–serine 1134 are compositionally biased toward basic and acidic residues. The PIP-box motif lies at glutamine 1160–phenylalanine 1167. Over residues glutamine 1169–threonine 1181 the composition is skewed to basic and acidic residues.

It belongs to the helicase family. RAD3/XPD subfamily. In terms of assembly, interacts with TERF1. Interacts (via PIP-box) with PCNA; the interaction is direct and essential for suppressing telomere fragility. Interacts with MMS19; the interaction mediates the association of RTEL1 with the cytosolic iron-sulfur protein assembly (CIA) complex. In terms of tissue distribution, widely expressed. Expressed in spleen, thymus, Peyer patches, kidney, and intestine. Not expressed in brain, heart, lung, skeletal muscles, skin and white fat. In the adult gonad, it is highly expressed in the testis, mainly in the spermatogonia and meiotic spermatocytes.

The protein localises to the nucleus. It carries out the reaction ATP + H2O = ADP + phosphate + H(+). Its function is as follows. A probable ATP-dependent DNA helicase implicated in telomere-length regulation, DNA repair and the maintenance of genomic stability. Acts as an anti-recombinase to counteract toxic recombination and limit crossover during meiosis. Regulates meiotic recombination and crossover homeostasis by physically dissociating strand invasion events and thereby promotes noncrossover repair by meiotic synthesis dependent strand annealing (SDSA) as well as disassembly of D loop recombination intermediates. Also disassembles T loops and prevents telomere fragility by counteracting telomeric G4-DNA structures, which together ensure the dynamics and stability of the telomere. This is Regulator of telomere elongation helicase 1 from Mus musculus (Mouse).